Reading from the N-terminus, the 189-residue chain is Probable nicotinate-nucleotide adenylyltransferase (189 aa).

The protein belongs to the NadD family.

The enzyme catalyses nicotinate beta-D-ribonucleotide + ATP + H(+) = deamido-NAD(+) + diphosphate. It participates in cofactor biosynthesis; NAD(+) biosynthesis; deamido-NAD(+) from nicotinate D-ribonucleotide: step 1/1. Catalyzes the reversible adenylation of nicotinate mononucleotide (NaMN) to nicotinic acid adenine dinucleotide (NaAD). The sequence is that of Probable nicotinate-nucleotide adenylyltransferase from Ruegeria sp. (strain TM1040) (Silicibacter sp.).